The chain runs to 330 residues: Probable deoxyhypusine synthase (330 aa).

Positions 1–25 (MTGDDADETHENVVPGSDEDLDTPD) are disordered. Lysine 298 (nucleophile) is an active-site residue.

It belongs to the deoxyhypusine synthase family. NAD(+) is required as a cofactor.

The catalysed reaction is [eIF5A protein]-L-lysine + spermidine = [eIF5A protein]-deoxyhypusine + propane-1,3-diamine. It functions in the pathway protein modification; eIF5A hypusination. In terms of biological role, catalyzes the NAD-dependent oxidative cleavage of spermidine and the subsequent transfer of the butylamine moiety of spermidine to the epsilon-amino group of a specific lysine residue of the eIF-5A precursor protein to form the intermediate deoxyhypusine residue. The sequence is that of Probable deoxyhypusine synthase from Halobacterium salinarum (strain ATCC 29341 / DSM 671 / R1).